A 184-amino-acid polypeptide reads, in one-letter code: Exosome complex protein LRP1 (184 aa).

The disordered stretch occupies residues 157 to 184 (DSTDHIRKASSKKSKRLDKVGKKKGGKK). A compositionally biased stretch (basic residues) spans 164–184 (KASSKKSKRLDKVGKKKGGKK).

This sequence belongs to the C1D family. Associates with nuclear form of the RNA exosome complex. Interacts with RRP4, RRP6, RRP45 and RRP46.

It localises to the nucleus. Its function is as follows. Required for exosome-dependent processing of pre-rRNA and small nucleolar RNA (snRNA) precursors. Involved in processing of 35S pre-rRNA at the A0, A1 and A2 sites. Required for activity of RRP6 in 7S pre-rRNA processing. Also has a role in 3'-processing of U4 and U5 small nuclear RNAs (snRNAs). Acts as a mRNA export factor. Mediates mRNA degradation upon UV irradiation. Maintains genome integrity where it is involved in both non-homologous end joining (NHEJ) and homologous recombination pathway repair of double strand DNA breaks. During NHEJ, required for joining 3'-overhanging ends. Also involved in telomere length regulation and maintenance. This chain is Exosome complex protein LRP1 (LRP1), found in Saccharomyces cerevisiae (strain ATCC 204508 / S288c) (Baker's yeast).